Here is a 315-residue protein sequence, read N- to C-terminus: MQPESGANGTVIAEFILLGLLEAPGLQPVVFVLFLFAYLVTVGGNLSILAAVLVEPKLHSPMYFFLGNLSVLDVGCISVTVPSMLSRLLSRKRAVPCGACLTQLFFFHLFVGVDCFLLTAMAYDRFLAICRPLTYSTRMSQTVQRMLVAASWACAFTNALTHTVAMSTLNFCGPNEVNHFYCDLPQLFQLSCSSTQLNELLLFAVGFIMAGTPMALIVISYIHVAAAVLRIRSVEGRKKAFSTCGSHLTVVAMFYGSGIFNYMRLGSTKLSDKDKAVGIFNTVINPMVNPIIYRFRNPEVQSAIWRMLTGRRSLA.

Residues 1-28 (MQPESGANGTVIAEFILLGLLEAPGLQP) are Extracellular-facing. A glycan (N-linked (GlcNAc...) asparagine) is linked at asparagine 8. Residues 29 to 52 (VVFVLFLFAYLVTVGGNLSILAAV) form a helical membrane-spanning segment. Over 53 to 60 (LVEPKLHS) the chain is Cytoplasmic. The chain crosses the membrane as a helical span at residues 61 to 82 (PMYFFLGNLSVLDVGCISVTVP). The Extracellular segment spans residues 83-103 (SMLSRLLSRKRAVPCGACLTQ). Cysteine 100 and cysteine 192 form a disulfide bridge. The chain crosses the membrane as a helical span at residues 104–123 (LFFFHLFVGVDCFLLTAMAY). Residues 124 to 143 (DRFLAICRPLTYSTRMSQTV) are Cytoplasmic-facing. A helical transmembrane segment spans residues 144–161 (QRMLVAASWACAFTNALT). Residues 162-199 (HTVAMSTLNFCGPNEVNHFYCDLPQLFQLSCSSTQLNE) are Extracellular-facing. Residues 200–223 (LLLFAVGFIMAGTPMALIVISYIH) form a helical membrane-spanning segment. Residues 224 to 240 (VAAAVLRIRSVEGRKKA) are Cytoplasmic-facing. A helical membrane pass occupies residues 241-264 (FSTCGSHLTVVAMFYGSGIFNYMR). Over 265–275 (LGSTKLSDKDK) the chain is Extracellular. Residues 276-295 (AVGIFNTVINPMVNPIIYRF) form a helical membrane-spanning segment. The Cytoplasmic portion of the chain corresponds to 296–315 (RNPEVQSAIWRMLTGRRSLA).

Belongs to the G-protein coupled receptor 1 family.

The protein localises to the cell membrane. In terms of biological role, odorant receptor. The chain is Olfactory receptor 3A1 (OR3A1) from Pan troglodytes (Chimpanzee).